Reading from the N-terminus, the 314-residue chain is Glycerol-3-phosphate dehydrogenase [NAD(P)+] (314 aa).

Ser-14, Phe-15, Arg-35, and Lys-108 together coordinate NADPH. Sn-glycerol 3-phosphate contacts are provided by Lys-108 and Gly-136. Ala-140 is an NADPH binding site. Sn-glycerol 3-phosphate is bound by residues Lys-191, Asp-247, Ser-257, Arg-258, and Asn-259. Lys-191 (proton acceptor) is an active-site residue. Arg-258 is a binding site for NADPH. NADPH is bound by residues Leu-282 and Glu-284.

This sequence belongs to the NAD-dependent glycerol-3-phosphate dehydrogenase family.

It localises to the cytoplasm. It carries out the reaction sn-glycerol 3-phosphate + NAD(+) = dihydroxyacetone phosphate + NADH + H(+). It catalyses the reaction sn-glycerol 3-phosphate + NADP(+) = dihydroxyacetone phosphate + NADPH + H(+). Its pathway is membrane lipid metabolism; glycerophospholipid metabolism. Its function is as follows. Catalyzes the reduction of the glycolytic intermediate dihydroxyacetone phosphate (DHAP) to sn-glycerol 3-phosphate (G3P), the key precursor for phospholipid synthesis. The chain is Glycerol-3-phosphate dehydrogenase [NAD(P)+] from Rickettsia bellii (strain OSU 85-389).